The primary structure comprises 879 residues: Fanconi anemia core complex-associated protein 100 (879 aa).

Belongs to the multisubunit FA complex composed of FANCA, FANCB, FANCC, FANCE, FANCF, FANCG, FANCL/PHF9, FANCM, FAAP24 and FAAP100. Forms a subcomplex with FANCB and FANCL.

It is found in the nucleus. In terms of biological role, plays a role in Fanconi anemia-associated DNA damage response network. Regulates FANCD2 monoubiquitination and the stability of the FA core complex. Induces chromosomal instability as well as hypersensitivity to DNA cross-linking agents, when repressed. The polypeptide is Fanconi anemia core complex-associated protein 100 (Mus musculus (Mouse)).